The chain runs to 433 residues: Methylenetetrahydrofolate--tRNA-(uracil-5-)-methyltransferase TrmFO (433 aa).

8 to 13 (GAGLAG) is a binding site for FAD.

Belongs to the MnmG family. TrmFO subfamily. It depends on FAD as a cofactor.

The protein resides in the cytoplasm. It carries out the reaction uridine(54) in tRNA + (6R)-5,10-methylene-5,6,7,8-tetrahydrofolate + NADH + H(+) = 5-methyluridine(54) in tRNA + (6S)-5,6,7,8-tetrahydrofolate + NAD(+). It catalyses the reaction uridine(54) in tRNA + (6R)-5,10-methylene-5,6,7,8-tetrahydrofolate + NADPH + H(+) = 5-methyluridine(54) in tRNA + (6S)-5,6,7,8-tetrahydrofolate + NADP(+). In terms of biological role, catalyzes the folate-dependent formation of 5-methyl-uridine at position 54 (M-5-U54) in all tRNAs. This chain is Methylenetetrahydrofolate--tRNA-(uracil-5-)-methyltransferase TrmFO, found in Carboxydothermus hydrogenoformans (strain ATCC BAA-161 / DSM 6008 / Z-2901).